The following is a 190-amino-acid chain: Xanthine phosphoribosyltransferase (190 aa).

L20 and N27 together coordinate xanthine. 128 to 132 (ANGHA) is a binding site for 5-phospho-alpha-D-ribose 1-diphosphate. K156 serves as a coordination point for xanthine.

This sequence belongs to the purine/pyrimidine phosphoribosyltransferase family. Xpt subfamily. As to quaternary structure, homodimer.

It is found in the cytoplasm. The catalysed reaction is XMP + diphosphate = xanthine + 5-phospho-alpha-D-ribose 1-diphosphate. It participates in purine metabolism; XMP biosynthesis via salvage pathway; XMP from xanthine: step 1/1. In terms of biological role, converts the preformed base xanthine, a product of nucleic acid breakdown, to xanthosine 5'-monophosphate (XMP), so it can be reused for RNA or DNA synthesis. This Ectopseudomonas mendocina (strain ymp) (Pseudomonas mendocina) protein is Xanthine phosphoribosyltransferase.